The chain runs to 210 residues: Probable GTP-binding protein EngB (210 aa).

The 175-residue stretch at 25 to 199 (TGIEVAFAGR…RQKLDTWFNE (175 aa)) folds into the EngB-type G domain. Residues 33–40 (GRSNAGKS), 60–64 (GRTQL), 78–81 (DLPG), 145–148 (TKAD), and 178–180 (FSS) contribute to the GTP site. Mg(2+)-binding residues include S40 and T62.

This sequence belongs to the TRAFAC class TrmE-Era-EngA-EngB-Septin-like GTPase superfamily. EngB GTPase family. Mg(2+) is required as a cofactor.

Functionally, necessary for normal cell division and for the maintenance of normal septation. This Escherichia coli O157:H7 protein is Probable GTP-binding protein EngB.